Consider the following 315-residue polypeptide: Transcription repressor OFP7 (315 aa).

The disordered stretch occupies residues tyrosine 113–arginine 183. Positions arginine 130–glycine 145 are enriched in basic residues. Residues leucine 160–glutamate 174 are compositionally biased toward polar residues. Positions valine 230–alanine 289 constitute an OVATE domain.

In terms of tissue distribution, expressed in roots, shoots, stems, flower buds and siliques.

Its subcellular location is the nucleus. Functionally, transcriptional repressor that regulates multiple aspects of plant growth and development through the regulation of BEL1-LIKE (BLH) and KNOX TALE (KNAT) homeodomain transcription factors. This chain is Transcription repressor OFP7 (OFP7), found in Arabidopsis thaliana (Mouse-ear cress).